We begin with the raw amino-acid sequence, 336 residues long: tRNA N6-adenosine threonylcarbamoyltransferase (336 aa).

Positions 114 and 118 each coordinate Fe cation. Substrate contacts are provided by residues 136 to 140 (LVSGG), D169, G182, D186, and N275. Residue D301 participates in Fe cation binding.

Belongs to the KAE1 / TsaD family. Fe(2+) serves as cofactor.

The protein localises to the cytoplasm. It catalyses the reaction L-threonylcarbamoyladenylate + adenosine(37) in tRNA = N(6)-L-threonylcarbamoyladenosine(37) in tRNA + AMP + H(+). Its function is as follows. Required for the formation of a threonylcarbamoyl group on adenosine at position 37 (t(6)A37) in tRNAs that read codons beginning with adenine. Is involved in the transfer of the threonylcarbamoyl moiety of threonylcarbamoyl-AMP (TC-AMP) to the N6 group of A37, together with TsaE and TsaB. TsaD likely plays a direct catalytic role in this reaction. The sequence is that of tRNA N6-adenosine threonylcarbamoyltransferase from Streptococcus mutans serotype c (strain ATCC 700610 / UA159).